The following is a 355-amino-acid chain: Uroporphyrinogen decarboxylase (355 aa).

Substrate is bound by residues 23–27 (RQAGR), Asp72, Tyr148, Ser203, and His321.

It belongs to the uroporphyrinogen decarboxylase family. As to quaternary structure, homodimer.

Its subcellular location is the cytoplasm. The catalysed reaction is uroporphyrinogen III + 4 H(+) = coproporphyrinogen III + 4 CO2. It participates in porphyrin-containing compound metabolism; protoporphyrin-IX biosynthesis; coproporphyrinogen-III from 5-aminolevulinate: step 4/4. Catalyzes the decarboxylation of four acetate groups of uroporphyrinogen-III to yield coproporphyrinogen-III. The chain is Uroporphyrinogen decarboxylase from Chloroflexus aurantiacus (strain ATCC 29366 / DSM 635 / J-10-fl).